Here is a 362-residue protein sequence, read N- to C-terminus: Probable dual-specificity RNA methyltransferase RlmN (362 aa).

Glu-105 functions as the Proton acceptor in the catalytic mechanism. Residues 111-344 (HEYGNSICVT…VTIRREQGHD (234 aa)) enclose the Radical SAM core domain. Cys-118 and Cys-349 are oxidised to a cystine. Residues Cys-125, Cys-129, and Cys-132 each coordinate [4Fe-4S] cluster. Residues 175–176 (GE), Ser-207, 230–232 (SLH), and Asn-306 contribute to the S-adenosyl-L-methionine site. Catalysis depends on Cys-349, which acts as the S-methylcysteine intermediate.

It belongs to the radical SAM superfamily. RlmN family. [4Fe-4S] cluster is required as a cofactor.

Its subcellular location is the cytoplasm. It catalyses the reaction adenosine(2503) in 23S rRNA + 2 reduced [2Fe-2S]-[ferredoxin] + 2 S-adenosyl-L-methionine = 2-methyladenosine(2503) in 23S rRNA + 5'-deoxyadenosine + L-methionine + 2 oxidized [2Fe-2S]-[ferredoxin] + S-adenosyl-L-homocysteine. The catalysed reaction is adenosine(37) in tRNA + 2 reduced [2Fe-2S]-[ferredoxin] + 2 S-adenosyl-L-methionine = 2-methyladenosine(37) in tRNA + 5'-deoxyadenosine + L-methionine + 2 oxidized [2Fe-2S]-[ferredoxin] + S-adenosyl-L-homocysteine. Specifically methylates position 2 of adenine 2503 in 23S rRNA and position 2 of adenine 37 in tRNAs. This Bacillus cereus (strain G9842) protein is Probable dual-specificity RNA methyltransferase RlmN.